Consider the following 505-residue polypeptide: DEAD-box ATP-dependent RNA helicase 38 (505 aa).

Residues Met-1–Ser-81 form a disordered region. Residues Lys-27–Ala-44 are compositionally biased toward low complexity. Positions Ala-100–Ala-129 match the Q motif motif. A Helicase ATP-binding domain is found at Met-134 to Ile-310. Ala-147 to Thr-154 serves as a coordination point for ATP. Positions Asp-254–Asp-257 match the DEAD box motif. In terms of domain architecture, Helicase C-terminal spans Val-338–Asp-493.

This sequence belongs to the DEAD box helicase family. DDX19/DBP5 subfamily.

The protein resides in the cytoplasm. Its subcellular location is the nucleus. The enzyme catalyses ATP + H2O = ADP + phosphate + H(+). In terms of biological role, ATP-dependent RNA helicase essential for mRNA export from the nucleus. Plays an important role in the positive regulation of CBF/DREB transcription factors. This is DEAD-box ATP-dependent RNA helicase 38 from Oryza sativa subsp. japonica (Rice).